We begin with the raw amino-acid sequence, 262 residues long: Endoplasmic reticulum chaperone BiP (262 aa).

8–11 (GSTR) is a binding site for ATP. The tract at residues 53-63 (QDTGDLVLLDV) is interdomain linker. The segment at 64–144 (CPLTLGIETV…PRGVPQIEVT (81 aa)) is substrate-binding (SBD). The residue at position 91 (K91) is an N6-succinyllysine. An Omega-N-methylarginine modification is found at R136. An O-AMP-threonine; alternate modification is found at T162. Phosphothreonine; alternate is present on T162. K229 is subject to N6,N6,N6-trimethyllysine; by METTL21A; in vitro. The residue at position 229 (K229) is an N6,N6-dimethyllysine; alternate. K229 is modified (N6-methyllysine; alternate). An N6-methyllysine modification is found at K235.

This sequence belongs to the heat shock protein 70 family. As to quaternary structure, monomer and homooligomer; homooligomerization via the interdomain linker inactivates the chaperone activity and acts as a storage of HSPA5/BiP molecules. Interacts with DNAJC1 (via J domain). Component of an EIF2 complex at least composed of CELF1/CUGBP1, CALR, CALR3, EIF2S1, EIF2S2, HSP90B1 and HSPA5. Part of a large chaperone multiprotein complex comprising DNAJB11, HSP90B1, HSPA5, HYOU, PDIA2, PDIA4, PDIA6, PPIB, SDF2L1, UGGT1 and very small amounts of ERP29, but not, or at very low levels, CALR nor CANX. Interacts with TMEM132A and TRIM21. May form a complex with ERLEC1, OS9, SEL1L and SYVN1. Interacts with DNAJC10. Interacts with DNAJB9/ERdj4; leading to recruit HSPA5/BiP to ERN1/IRE1. Interacts with ERN1/IRE1 (via luminal domain); the interaction takes place following interaction with DNAJB9/ERdj4 and leads to inactivate ERN1/IRE1, the interaction also competitively inhibits ERN1 interaction with MANF. Interacts directly with MANF (via SAP domain); the interaction inhibits ATP binding to HSPA5/BiP and subsequent nucleotide exchange. Interacts with EIF2AK3/PERK (via luminal domain); interaction leads to inactivate EIF2AK3/PERK. Interacts with MX1. Interacts with METTL23. Interacts with CEMIP; the interaction induces calcium leakage from the endoplasmic reticulum and cell migration. Interacts with PCSK4 form; the interaction takes place in the endoplasmic reticulum. Interacts with CIPC. Interacts with CCDC88B (via C-terminus); the interaction opposes ERN1-mediated JNK activation, protecting against apoptosis. Interacts with INPP5K; necessary for INPP5K localization at the endoplasmic reticulum. Interacts with MANF; the interaction is direct. Interacts with LOXL2; leading to activate the ERN1/IRE1-XBP1 pathway of the unfolded protein response. Interacts with CLU under stressed condition; interaction increases CLU protein stability; facilitates its retrotranslocation and redistribution to the mitochondria; cooperatively suppress stress-induced apoptosis by stabilizing mitochondrial membrane integrity. Interacts with CCDC47. Interacts with CLN3. Interacts with ELAPOR1; may regulate the function of HSPA5 in apoptosis and cell proliferation. Interacts with CASP7. Interacts with ILDR2; the interaction stabilizes ILDR2 expression. Interacts with ADAM7. In unstressed cells, AMPylation at Thr-162 by FICD inactivates the chaperome activity: AMPylated form is locked in a relatively inert state and only weakly stimulated by J domain-containing proteins. In response to endoplasmic reticulum stress, de-AMPylation by the same protein, FICD, restores the chaperone activity.

Its subcellular location is the endoplasmic reticulum lumen. The protein resides in the melanosome. It is found in the cytoplasm. It localises to the cell surface. The enzyme catalyses ATP + H2O = ADP + phosphate + H(+). With respect to regulation, the chaperone activity is regulated by ATP-induced allosteric coupling of the nucleotide-binding (NBD) and substrate-binding (SBD) domains. In the ADP-bound and nucleotide-free (apo) states, the two domains have little interaction. In contrast, in the ATP-bound state the two domains are tightly coupled, which results in drastically accelerated kinetics in both binding and release of polypeptide substrates. J domain-containing co-chaperones (DNAJB9/ERdj4 or DNAJC10/ERdj5) stimulate the ATPase activity and are required for efficient substrate recognition by HSPA5/BiP. Homooligomerization inactivates participating HSPA5/BiP protomers and probably act as reservoirs to store HSPA5/BiP molecules when they are not needed by the cell. Functionally, endoplasmic reticulum chaperone that plays a key role in protein folding and quality control in the endoplasmic reticulum lumen. Involved in the correct folding of proteins and degradation of misfolded proteins via its interaction with DNAJC10/ERdj5, probably to facilitate the release of DNAJC10/ERdj5 from its substrate. Acts as a key repressor of the EIF2AK3/PERK and ERN1/IRE1-mediated unfolded protein response (UPR). In the unstressed endoplasmic reticulum, recruited by DNAJB9/ERdj4 to the luminal region of ERN1/IRE1, leading to disrupt the dimerization of ERN1/IRE1, thereby inactivating ERN1/IRE1. Also binds and inactivates EIF2AK3/PERK in unstressed cells. Accumulation of misfolded protein in the endoplasmic reticulum causes release of HSPA5/BiP from ERN1/IRE1 and EIF2AK3/PERK, allowing their homodimerization and subsequent activation. Plays an auxiliary role in post-translational transport of small presecretory proteins across endoplasmic reticulum (ER). May function as an allosteric modulator for SEC61 channel-forming translocon complex, likely cooperating with SEC62 to enable the productive insertion of these precursors into SEC61 channel. Appears to specifically regulate translocation of precursors having inhibitory residues in their mature region that weaken channel gating. May also play a role in apoptosis and cell proliferation. In Sus scrofa (Pig), this protein is Endoplasmic reticulum chaperone BiP.